The primary structure comprises 412 residues: Polyferredoxin protein MvhB (412 aa).

12 4Fe-4S ferredoxin-type domains span residues 2–29 (IIVN…VTPE), 30–57 (DVIY…LEDL), 67–96 (GRIV…LDEG), 97–127 (KVKK…VEGI), 138–166 (EGPI…LDKV), 168–197 (GVIE…ISGR), 207–236 (KKFE…PRTS), 238–266 (LTVE…LEVE), 276–305 (EGLV…VVTK), 314–345 (EKVD…LVDM), 357–386 (KRVQ…LTDE), and 385–412 (DEKV…LSLK). Residues C9, C12, C15, and C19 each coordinate [4Fe-4S] cluster. [4Fe-4S] cluster contacts are provided by C76, C79, C82, C86, C107, C110, C113, C117, C146, C149, C152, C156, C177, C180, C183, C187, C216, C219, C222, C226, C246, C249, C252, and C256. The [4Fe-4S] cluster site is built by C325, C328, C331, C335, C366, C369, C372, C376, C394, C397, C400, and C404.

[4Fe-4S] cluster serves as cofactor.

The chain is Polyferredoxin protein MvhB (mvhB) from Methanothermobacter thermautotrophicus (strain ATCC 29096 / DSM 1053 / JCM 10044 / NBRC 100330 / Delta H) (Methanobacterium thermoautotrophicum).